We begin with the raw amino-acid sequence, 242 residues long: Ubiquitin-conjugating enzyme E2 6 (242 aa).

The Cytoplasmic portion of the chain corresponds to 1 to 217 (MASRQAYKRL…QPAGNGTTSN (217 aa)). Residues 5–163 (QAYKRLSKEY…FPELAEQNRR (159 aa)) enclose the UBC core domain. Cysteine 87 (glycyl thioester intermediate) is an active-site residue. The helical transmembrane segment at 218 to 240 (SIGRSLLFVLFSLAALLVAVCYT) threads the bilayer.

This sequence belongs to the ubiquitin-conjugating enzyme family.

It localises to the endoplasmic reticulum membrane. The catalysed reaction is S-ubiquitinyl-[E1 ubiquitin-activating enzyme]-L-cysteine + [E2 ubiquitin-conjugating enzyme]-L-cysteine = [E1 ubiquitin-activating enzyme]-L-cysteine + S-ubiquitinyl-[E2 ubiquitin-conjugating enzyme]-L-cysteine.. The protein operates within protein modification; protein ubiquitination. Functionally, catalyzes the covalent attachment of ubiquitin to other proteins. Functions in degradation of misfolded or regulated proteins localized in the endoplasmic reticulum (ER) lumen or membrane via the ubiquitin-proteasome system. Cognate E2 conjugating enzyme for the DOA10 ubiquitin ligase complex, which is part of the ERAD-C pathway responsible for the rapid degradation of membrane proteins with misfolded cytoplasmic domains. The polypeptide is Ubiquitin-conjugating enzyme E2 6 (UBC6) (Eremothecium gossypii (strain ATCC 10895 / CBS 109.51 / FGSC 9923 / NRRL Y-1056) (Yeast)).